A 465-amino-acid chain; its full sequence is Glutamate--tRNA ligase 2 (465 aa).

The 'HIGH' region signature appears at 8–18 (PSPTGLMHLGN). The 'KMSKS' region signature appears at 249 to 253 (PLSKR). K252 serves as a coordination point for ATP.

This sequence belongs to the class-I aminoacyl-tRNA synthetase family. Glutamate--tRNA ligase type 1 subfamily. In terms of assembly, monomer.

The protein resides in the cytoplasm. The enzyme catalyses tRNA(Glu) + L-glutamate + ATP = L-glutamyl-tRNA(Glu) + AMP + diphosphate. In terms of biological role, catalyzes the attachment of glutamate to tRNA(Glu) in a two-step reaction: glutamate is first activated by ATP to form Glu-AMP and then transferred to the acceptor end of tRNA(Glu). The polypeptide is Glutamate--tRNA ligase 2 (Coxiella burnetii (strain RSA 331 / Henzerling II)).